We begin with the raw amino-acid sequence, 186 residues long: MSIVIINNFGQYNHRISRTLKYLNIENSLIPNTTSFEEIEQMNPKGIILGGGPSIERIGNCKEIILNMDIPILGICLGHQIIADVFGGETKSAEIESYAQIELNILKENGLFKGIGDSLKVWASHKDEVVTLPENFEILANSDKCDIEAMKHEDKNIYGIQFHPEVQHTPRGGEIFENFNKICENY.

The 185-residue stretch at Ser2–Tyr186 folds into the Glutamine amidotransferase type-1 domain. Cys76 (nucleophile) is an active-site residue. Active-site residues include His163 and Glu165.

As to quaternary structure, heterodimer composed of a glutamine amidotransferase subunit (A) and a GMP-binding subunit (B).

The catalysed reaction is XMP + L-glutamine + ATP + H2O = GMP + L-glutamate + AMP + diphosphate + 2 H(+). Its pathway is purine metabolism; GMP biosynthesis; GMP from XMP (L-Gln route): step 1/1. In terms of biological role, catalyzes the synthesis of GMP from XMP. The chain is GMP synthase [glutamine-hydrolyzing] subunit A from Methanosphaera stadtmanae (strain ATCC 43021 / DSM 3091 / JCM 11832 / MCB-3).